Here is a 387-residue protein sequence, read N- to C-terminus: Formate-dependent phosphoribosylglycinamide formyltransferase (387 aa).

N(1)-(5-phospho-beta-D-ribosyl)glycinamide-binding positions include 21–22 (EL) and glutamate 81. ATP-binding positions include arginine 113, lysine 154, 159 to 164 (SSGHGQ), 193 to 196 (EEFV), and glutamate 201. In terms of domain architecture, ATP-grasp spans 118–306 (VFAAETLDLK…EFALHVRAVL (189 aa)). Residues glutamate 265 and glutamate 277 each coordinate Mg(2+). N(1)-(5-phospho-beta-D-ribosyl)glycinamide contacts are provided by residues aspartate 284, lysine 352, and 359–360 (RR).

It belongs to the PurK/PurT family. Homodimer.

It catalyses the reaction N(1)-(5-phospho-beta-D-ribosyl)glycinamide + formate + ATP = N(2)-formyl-N(1)-(5-phospho-beta-D-ribosyl)glycinamide + ADP + phosphate + H(+). It participates in purine metabolism; IMP biosynthesis via de novo pathway; N(2)-formyl-N(1)-(5-phospho-D-ribosyl)glycinamide from N(1)-(5-phospho-D-ribosyl)glycinamide (formate route): step 1/1. Its function is as follows. Involved in the de novo purine biosynthesis. Catalyzes the transfer of formate to 5-phospho-ribosyl-glycinamide (GAR), producing 5-phospho-ribosyl-N-formylglycinamide (FGAR). Formate is provided by PurU via hydrolysis of 10-formyl-tetrahydrofolate. The polypeptide is Formate-dependent phosphoribosylglycinamide formyltransferase (Sulfurovum sp. (strain NBC37-1)).